A 73-amino-acid chain; its full sequence is Kappa-scoloptoxin(03)-Ssm1b (73 aa).

An N-terminal signal peptide occupies residues 1 to 23 (MKPSMAILLVIALIIFSLDKSYS). Cystine bridges form between Cys-32-Cys-58, Cys-41-Cys-57, and Cys-44-Cys-67.

Contains 3 disulfide bonds. Expressed by the venom gland.

Its subcellular location is the secreted. Its function is as follows. Inhibits voltage-gated potassium channels. The protein is Kappa-scoloptoxin(03)-Ssm1b of Scolopendra mutilans (Chinese red-headed centipede).